The chain runs to 905 residues: Cadherin-2B (905 aa).

Positions 1–28 (MCRKQPFLLPTLLGILAALMLQQGPVEA) are cleaved as a signal peptide. Residues 29–160 (FGGSRLCKTG…NSNGLQRQKR (132 aa)) constitute a propeptide that is removed on maturation. Cadherin domains are found at residues 161-268 (DWVI…RPEF), 269-383 (LHQI…PPEF), 384-498 (TAMT…NPYF), 499-604 (TPNP…DNAP), and 605-713 (YVYP…TTAP). Topologically, residues 161 to 723 (DWVIPPINVP…IIGTGLGTGA (563 aa)) are extracellular. Position 171 (E171) interacts with Ca(2+). Residue N191 is glycosylated (N-linked (GlcNAc...) asparagine). 7 residues coordinate Ca(2+): D227, E229, D260, M261, N262, D263, and N264. An N-linked (GlcNAc...) asparagine glycan is attached at N274. Ca(2+)-binding residues include D294, D296, and N302. N326 is a glycosylation site (N-linked (GlcNAc...) asparagine). D354 provides a ligand contact to Ca(2+). 5 N-linked (GlcNAc...) asparagine glycosylation sites follow: N403, N573, N623, N651, and N692. The chain crosses the membrane as a helical span at residues 724–745 (IIAILLCIIILLTLVLMFVVWM). Over 746-905 (KRRDKERQAK…LADMYGGSDD (160 aa)) the chain is Cytoplasmic. 2 disordered regions span residues 774-800 (EEGG…PDTI) and 862-883 (SGST…EQDY). Residues 775-784 (EGGGEEDQDY) show a composition bias toward acidic residues. Residues 862 to 879 (SGSTAGSLSSLNSSSSGG) show a composition bias toward low complexity.

Homodimer (via extracellular region). Can also form heterodimers with other cadherins (via extracellular region). Dimerization occurs in trans, i.e. with a cadherin chain from another cell.

Its subcellular location is the cell membrane. The protein resides in the sarcolemma. It is found in the cell junction. The protein localises to the cell surface. It localises to the desmosome. Its subcellular location is the adherens junction. In terms of biological role, calcium-dependent cell adhesion protein; preferentially mediates homotypic cell-cell adhesion. Cadherins may thus contribute to the sorting of heterogeneous cell types, and thereby play an important role during embryonic development. Required for proper neurite branching. Required for pre- and postsynaptic organization. In Xenopus laevis (African clawed frog), this protein is Cadherin-2B (cdh2-b).